A 116-amino-acid polypeptide reads, in one-letter code: Galanin-like peptide (116 aa).

The first 24 residues, 1–24 (MAPPSVPLVLLLVLLLSLAETPAS), serve as a signal peptide directing secretion. A propeptide spanning residues 87 to 116 (NVMETFAKPEIGDLGMLSMKIPKEEDVLKS) is cleaved from the precursor.

This sequence belongs to the galanin family. As to expression, isoform 2 is found in ganglia of ganglioneuroma and ganglioneuroblastoma, as well as in differentiated tumor cells of neuroblastoma tissues. Not found in undifferentiated neuroblasts. Isoform 2 is found in the skin, in pericytes covering microvascular arterioles and venules on their abluminal surfaces. In larger vessels, isoform 2 is expressed in layers of smooth muscle cells. Isoform 2 is not detected in endothelial cells.

It localises to the secreted. Functionally, hypothalamic neuropeptide which binds to the G-protein-coupled galanin receptors (GALR1, GALR2 and GALR3). Involved in a large number of putative physiological functions in CNS homeostatic processes, including the regulation of gonadotropin-releasing hormone secretion. Exhibits potent and dose-dependent vasoconstrictor and anti-edema activity in the cutaneous microvasculature, a physiologic effects which does not appear to be mediated via GALR1 or GALR2. Exhibits antimicrobial activity against Gram-negative bacterias, inducing bacterial membrane blebbing. This chain is Galanin-like peptide (GALP), found in Homo sapiens (Human).